A 429-amino-acid chain; its full sequence is Trigger factor (429 aa).

A PPIase FKBP-type domain is found at 161-246 (GDRLSIDFKG…INEIASPKEL (86 aa)).

It belongs to the FKBP-type PPIase family. Tig subfamily.

Its subcellular location is the cytoplasm. It catalyses the reaction [protein]-peptidylproline (omega=180) = [protein]-peptidylproline (omega=0). Its function is as follows. Involved in protein export. Acts as a chaperone by maintaining the newly synthesized protein in an open conformation. Functions as a peptidyl-prolyl cis-trans isomerase. The protein is Trigger factor of Vesicomyosocius okutanii subsp. Calyptogena okutanii (strain HA).